The following is a 412-amino-acid chain: Proteasome-activating nucleotidase (412 aa).

The stretch at Glu15–Ser72 forms a coiled coil. ATP is bound by residues Gly197–Leu202 and His336. Positions Met410–Ala412 are docks into pockets in the proteasome alpha-ring to cause gate opening.

It belongs to the AAA ATPase family. In terms of assembly, homohexamer. The hexameric complex has a two-ring architecture resembling a top hat that caps the 20S proteasome core at one or both ends. Upon ATP-binding, the C-terminus of PAN interacts with the alpha-rings of the proteasome core by binding to the intersubunit pockets.

The protein resides in the cytoplasm. In terms of biological role, ATPase which is responsible for recognizing, binding, unfolding and translocation of substrate proteins into the archaeal 20S proteasome core particle. Is essential for opening the gate of the 20S proteasome via an interaction with its C-terminus, thereby allowing substrate entry and access to the site of proteolysis. Thus, the C-termini of the proteasomal ATPase function like a 'key in a lock' to induce gate opening and therefore regulate proteolysis. Unfolding activity requires energy from ATP hydrolysis, whereas ATP binding alone promotes ATPase-20S proteasome association which triggers gate opening, and supports translocation of unfolded substrates. This chain is Proteasome-activating nucleotidase, found in Methanosphaerula palustris (strain ATCC BAA-1556 / DSM 19958 / E1-9c).